The primary structure comprises 764 residues: 1,4-alpha-glucan branching enzyme GlgB (764 aa).

D431 (nucleophile) is an active-site residue. Residue E484 is the Proton donor of the active site.

It belongs to the glycosyl hydrolase 13 family. GlgB subfamily. As to quaternary structure, monomer.

It carries out the reaction Transfers a segment of a (1-&gt;4)-alpha-D-glucan chain to a primary hydroxy group in a similar glucan chain.. It functions in the pathway glycan biosynthesis; glycogen biosynthesis. Functionally, catalyzes the formation of the alpha-1,6-glucosidic linkages in glycogen by scission of a 1,4-alpha-linked oligosaccharide from growing alpha-1,4-glucan chains and the subsequent attachment of the oligosaccharide to the alpha-1,6 position. The chain is 1,4-alpha-glucan branching enzyme GlgB from Synechococcus sp. (strain CC9902).